The following is a 253-amino-acid chain: 5'-nucleotidase SurE (253 aa).

4 residues coordinate a divalent metal cation: Asp8, Asp9, Ser39, and Asn92.

Belongs to the SurE nucleotidase family. It depends on a divalent metal cation as a cofactor.

It localises to the cytoplasm. It catalyses the reaction a ribonucleoside 5'-phosphate + H2O = a ribonucleoside + phosphate. Nucleotidase that shows phosphatase activity on nucleoside 5'-monophosphates. The chain is 5'-nucleotidase SurE from Burkholderia mallei (strain NCTC 10247).